The sequence spans 275 residues: MSSRKKVRVLLLKNKTVPIDKYELECRSKAFEPIFVPLIKHTHVIQDFRNVLNTIPNYLNTINYIIITSQRTVESLNEAIIPTLTSEQKAALLSKTVYTVGPATANFIRRSGFINVKGGEDAGNGSILADIIIDDLSTDIKACPPSELLFLVGEIRRDIIPKKLHSKGIKVREVVTYKTEELSDGFKRFIHAMKECDEDEVFSDWVVVFSPQGTKEITQYLGDSNRLPGSHLRVASIGPTTKKYLDDNDVTSDVVSPKPDPKSLLDAIELYQRHK.

The protein belongs to the uroporphyrinogen-III synthase family.

The catalysed reaction is hydroxymethylbilane = uroporphyrinogen III + H2O. The protein operates within porphyrin-containing compound metabolism; protoporphyrin-IX biosynthesis; coproporphyrinogen-III from 5-aminolevulinate: step 3/4. In terms of biological role, catalyzes cyclization of the linear tetrapyrrole, hydroxymethylbilane, to the macrocyclic uroporphyrinogen III, the fourth step in the heme biosynthetic pathway. The protein is Uroporphyrinogen-III synthase of Saccharomyces cerevisiae (strain ATCC 204508 / S288c) (Baker's yeast).